Reading from the N-terminus, the 192-residue chain is Ion-translocating oxidoreductase complex subunit A (192 aa).

6 consecutive transmembrane segments (helical) span residues 5–25 (LLLLISTVLVNNFVLVKFLGL), 39–59 (IGMSMATTFVLTLASILSYLV), 65–85 (LPFDLGYLRTMSFILVIAVVV), 102–122 (ALGIYLPLITTNCAVLGVALL), 134–154 (AIYGFGAAVGFSLVLILFSAM), and 171–191 (AIAMITAGLMSLAFMGFTGLV).

This sequence belongs to the NqrDE/RnfAE family. The complex is composed of six subunits: RnfA, RnfB, RnfC, RnfD, RnfE and RnfG.

The protein resides in the cell inner membrane. Its function is as follows. Part of a membrane-bound complex that couples electron transfer with translocation of ions across the membrane. This is Ion-translocating oxidoreductase complex subunit A from Shewanella oneidensis (strain ATCC 700550 / JCM 31522 / CIP 106686 / LMG 19005 / NCIMB 14063 / MR-1).